An 88-amino-acid chain; its full sequence is Translation initiation factor IF-1 2 (88 aa).

In terms of domain architecture, S1-like spans 1-72 (MAKEELIEMQ…TKGRITFRHL (72 aa)).

This sequence belongs to the IF-1 family. In terms of assembly, component of the 30S ribosomal translation pre-initiation complex which assembles on the 30S ribosome in the order IF-2 and IF-3, IF-1 and N-formylmethionyl-tRNA(fMet); mRNA recruitment can occur at any time during PIC assembly.

The protein localises to the cytoplasm. One of the essential components for the initiation of protein synthesis. Stabilizes the binding of IF-2 and IF-3 on the 30S subunit to which N-formylmethionyl-tRNA(fMet) subsequently binds. Helps modulate mRNA selection, yielding the 30S pre-initiation complex (PIC). Upon addition of the 50S ribosomal subunit IF-1, IF-2 and IF-3 are released leaving the mature 70S translation initiation complex. This chain is Translation initiation factor IF-1 2, found in Acidovorax sp. (strain JS42).